A 207-amino-acid chain; its full sequence is MTDTPTKQEITSKNDKVPGAIPGEQKKNNRNNDRKRNRRGDSKNLERDSDWQERVVQIRRVSKTVKGGKKMSFRAIVVVGNEKGQVGVGVGKAGDVIGAVRKGVSDGKKNLVRVPLTPNNSIPTLSKGRDGAANVLIRPAAPGTGVIAGGSIRTVLELAGIKNVLAKRLGSKTPLNNARAAMVALSQLRTHKSASRERGISLEQLYS.

Positions 1–51 (MTDTPTKQEITSKNDKVPGAIPGEQKKNNRNNDRKRNRRGDSKNLERDSDW) are disordered. Over residues 24–51 (EQKKNNRNNDRKRNRRGDSKNLERDSDW) the composition is skewed to basic and acidic residues. One can recognise an S5 DRBM domain in the interval 51-114 (WQERVVQIRR…SDGKKNLVRV (64 aa)).

The protein belongs to the universal ribosomal protein uS5 family. In terms of assembly, part of the 30S ribosomal subunit. Contacts proteins S4 and S8.

Its function is as follows. With S4 and S12 plays an important role in translational accuracy. Located at the back of the 30S subunit body where it stabilizes the conformation of the head with respect to the body. This is Small ribosomal subunit protein uS5 from Prochlorococcus marinus (strain MIT 9312).